We begin with the raw amino-acid sequence, 206 residues long: MRGKLITLEGIDGSGKSTVAKKIQENPEIQVFDPVFTREPTRGTLTGTAVENAIQSETDQLAELFLFTADHAEHLAKLVKPALANGKNVISDRYSDSRYAYQGVTLKSRFENPLEWVRSLHSGWTVVPDLTFLFDIEPEIAVERCGKRGEQTKFEKIEFLQNVRENFLILAAEDPGRFVVIDASRPQEEVEKKVIKKVLEFIQRIS.

Position 10-17 (glycine 10–serine 17) interacts with ATP.

This sequence belongs to the thymidylate kinase family.

It carries out the reaction dTMP + ATP = dTDP + ADP. This Methanosarcina mazei (strain ATCC BAA-159 / DSM 3647 / Goe1 / Go1 / JCM 11833 / OCM 88) (Methanosarcina frisia) protein is Probable thymidylate kinase.